Consider the following 432-residue polypeptide: Adenylosuccinate synthetase (432 aa).

GTP contacts are provided by residues 12–18 and 40–42; these read GDEGKGK and GHT. The active-site Proton acceptor is Asp-13. 2 residues coordinate Mg(2+): Asp-13 and Gly-40. IMP-binding positions include 13–16, 38–41, Thr-129, Arg-143, Gln-224, Thr-239, and Arg-303; these read DEGK and NAGH. The active-site Proton donor is the His-41. 299 to 305 contacts substrate; sequence VTTGRRR. GTP is bound by residues Arg-305, 331 to 333, and 413 to 415; these read KLD and GVG.

This sequence belongs to the adenylosuccinate synthetase family. Homodimer. Mg(2+) is required as a cofactor.

Its subcellular location is the cytoplasm. It catalyses the reaction IMP + L-aspartate + GTP = N(6)-(1,2-dicarboxyethyl)-AMP + GDP + phosphate + 2 H(+). It participates in purine metabolism; AMP biosynthesis via de novo pathway; AMP from IMP: step 1/2. Plays an important role in the de novo pathway of purine nucleotide biosynthesis. Catalyzes the first committed step in the biosynthesis of AMP from IMP. In Mycobacterium marinum (strain ATCC BAA-535 / M), this protein is Adenylosuccinate synthetase.